Reading from the N-terminus, the 495-residue chain is Autoinducer 2 import ATP-binding protein LsrA (495 aa).

ABC transporter domains lie at 5–233 and 256–494; these read IEAH…TPVS and AQDF…FGGQ. Position 37-44 (37-44) interacts with ATP; it reads GGNGAGKS.

This sequence belongs to the ABC transporter superfamily. AI-2 autoinducer porter (TC 3.A.1.2.8) family. In terms of assembly, the complex is composed of two ATP-binding proteins (LsrA), two transmembrane proteins (LsrC and LsrD) and a solute-binding protein (LsrB).

The protein localises to the cell inner membrane. It catalyses the reaction ATP + H2O + (2R,4S)-2-methyl-2,3,3,4-tetrahydroxytetrahydrofuran-[AI-2-binding protein]Side 1 = ADP + phosphate + (2R,4S)-2-methyl-2,3,3,4-tetrahydroxytetrahydrofuranSide 2 + [AI-2-binding protein]Side 1.. In terms of biological role, part of the ABC transporter complex LsrABCD involved in autoinducer 2 (AI-2) import. Responsible for energy coupling to the transport system. This is Autoinducer 2 import ATP-binding protein LsrA (lsrA) from Enterobacter sp. (strain 638).